A 122-amino-acid chain; its full sequence is Large ribosomal subunit protein uL14 (122 aa).

This sequence belongs to the universal ribosomal protein uL14 family. In terms of assembly, part of the 50S ribosomal subunit. Forms a cluster with proteins L3 and L19. In the 70S ribosome, L14 and L19 interact and together make contacts with the 16S rRNA in bridges B5 and B8.

Binds to 23S rRNA. Forms part of two intersubunit bridges in the 70S ribosome. The sequence is that of Large ribosomal subunit protein uL14 from Alkalilimnicola ehrlichii (strain ATCC BAA-1101 / DSM 17681 / MLHE-1).